Reading from the N-terminus, the 338-residue chain is Ferredoxin--NADP reductase (338 aa).

Residues Asp-35, Gln-43, Tyr-48, Ala-88, Phe-122, Asp-289, and Thr-330 each contribute to the FAD site.

It belongs to the ferredoxin--NADP reductase type 2 family. As to quaternary structure, homodimer. Requires FAD as cofactor.

The catalysed reaction is 2 reduced [2Fe-2S]-[ferredoxin] + NADP(+) + H(+) = 2 oxidized [2Fe-2S]-[ferredoxin] + NADPH. The protein is Ferredoxin--NADP reductase of Ehrlichia chaffeensis (strain ATCC CRL-10679 / Arkansas).